We begin with the raw amino-acid sequence, 669 residues long: Protein adenylyltransferase SelO, mitochondrial (669 aa).

A mitochondrion-targeting transit peptide spans 1–115 (MAVYRAALGA…LGLGAPPARE (115 aa)). Residues Gly-153, Gly-155, Lys-176, Asp-188, Gly-189, Arg-246, and Arg-253 each coordinate ATP. Asp-338 functions as the Proton acceptor in the catalytic mechanism. 2 residues coordinate Mg(2+): Asn-339 and Asp-348. ATP is bound at residue Asp-348. The segment at 634–654 (ATDAEATEADGADGRQRSYSS) is disordered. Phosphothreonine is present on Thr-635. Phosphoserine is present on Ser-653. Residue Sec-667 is a non-standard amino acid, selenocysteine.

This sequence belongs to the SELO family. Mg(2+) serves as cofactor.

The protein localises to the mitochondrion. The catalysed reaction is L-tyrosyl-[protein] + ATP = O-(5'-adenylyl)-L-tyrosyl-[protein] + diphosphate. It catalyses the reaction L-threonyl-[protein] + ATP = 3-O-(5'-adenylyl)-L-threonyl-[protein] + diphosphate. It carries out the reaction L-seryl-[protein] + ATP = 3-O-(5'-adenylyl)-L-seryl-[protein] + diphosphate. Functionally, catalyzes the transfer of adenosine 5'-monophosphate (AMP) to Ser, Thr and Tyr residues of target proteins (AMPylation). May be a redox-active mitochondrial selenoprotein which interacts with a redox target protein. The sequence is that of Protein adenylyltransferase SelO, mitochondrial from Homo sapiens (Human).